Consider the following 522-residue polypeptide: tRNA-2-methylthio-N(6)-dimethylallyladenosine synthase (522 aa).

The region spanning 24–140 (RTYEVKTYGC…LPTLLQRAEH (117 aa)) is the MTTase N-terminal domain. The [4Fe-4S] cluster site is built by cysteine 33, cysteine 69, cysteine 103, cysteine 177, cysteine 181, and cysteine 184. In terms of domain architecture, Radical SAM core spans 163–399 (RESAYAGWVS…MVVQEQVCEE (237 aa)). The TRAM domain maps to 402-473 (QKLIGTTVEL…PFFLIADSGV (72 aa)).

This sequence belongs to the methylthiotransferase family. MiaB subfamily. In terms of assembly, monomer. Requires [4Fe-4S] cluster as cofactor.

It localises to the cytoplasm. It catalyses the reaction N(6)-dimethylallyladenosine(37) in tRNA + (sulfur carrier)-SH + AH2 + 2 S-adenosyl-L-methionine = 2-methylsulfanyl-N(6)-dimethylallyladenosine(37) in tRNA + (sulfur carrier)-H + 5'-deoxyadenosine + L-methionine + A + S-adenosyl-L-homocysteine + 2 H(+). In terms of biological role, catalyzes the methylthiolation of N6-(dimethylallyl)adenosine (i(6)A), leading to the formation of 2-methylthio-N6-(dimethylallyl)adenosine (ms(2)i(6)A) at position 37 in tRNAs that read codons beginning with uridine. The polypeptide is tRNA-2-methylthio-N(6)-dimethylallyladenosine synthase (Corynebacterium glutamicum (strain ATCC 13032 / DSM 20300 / JCM 1318 / BCRC 11384 / CCUG 27702 / LMG 3730 / NBRC 12168 / NCIMB 10025 / NRRL B-2784 / 534)).